Here is a 280-residue protein sequence, read N- to C-terminus: 2-dehydro-3-deoxyphosphooctonate aldolase (280 aa).

The protein belongs to the KdsA family.

Its subcellular location is the cytoplasm. The catalysed reaction is D-arabinose 5-phosphate + phosphoenolpyruvate + H2O = 3-deoxy-alpha-D-manno-2-octulosonate-8-phosphate + phosphate. It functions in the pathway carbohydrate biosynthesis; 3-deoxy-D-manno-octulosonate biosynthesis; 3-deoxy-D-manno-octulosonate from D-ribulose 5-phosphate: step 2/3. Its pathway is bacterial outer membrane biogenesis; lipopolysaccharide biosynthesis. This is 2-dehydro-3-deoxyphosphooctonate aldolase from Coxiella burnetii (strain CbuK_Q154) (Coxiella burnetii (strain Q154)).